Reading from the N-terminus, the 115-residue chain is UPF0295 protein BLi00901/BL05075 (115 aa).

2 consecutive transmembrane segments (helical) span residues leucine 18–leucine 38 and valine 41–glycine 61.

This sequence belongs to the UPF0295 family.

The protein localises to the cell membrane. In Bacillus licheniformis (strain ATCC 14580 / DSM 13 / JCM 2505 / CCUG 7422 / NBRC 12200 / NCIMB 9375 / NCTC 10341 / NRRL NRS-1264 / Gibson 46), this protein is UPF0295 protein BLi00901/BL05075.